A 709-amino-acid chain; its full sequence is Homeobox-leucine zipper protein TF1 (709 aa).

Residues Arg-66 to Cys-125 constitute a DNA-binding region (homeobox). Residues Asn-166–Ala-187 adopt a coiled-coil conformation. An START domain is found at Gly-212–Asp-441.

The protein belongs to the HD-ZIP homeobox family. Class IV subfamily.

The protein resides in the nucleus. Its function is as follows. Probable transcription factor. The chain is Homeobox-leucine zipper protein TF1 (TF1) from Oryza sativa subsp. japonica (Rice).